The chain runs to 252 residues: 2-succinyl-6-hydroxy-2,4-cyclohexadiene-1-carboxylate synthase (252 aa).

This sequence belongs to the AB hydrolase superfamily. MenH family. Monomer.

It catalyses the reaction 5-enolpyruvoyl-6-hydroxy-2-succinyl-cyclohex-3-ene-1-carboxylate = (1R,6R)-6-hydroxy-2-succinyl-cyclohexa-2,4-diene-1-carboxylate + pyruvate. Its pathway is quinol/quinone metabolism; 1,4-dihydroxy-2-naphthoate biosynthesis; 1,4-dihydroxy-2-naphthoate from chorismate: step 3/7. It functions in the pathway quinol/quinone metabolism; menaquinone biosynthesis. Catalyzes a proton abstraction reaction that results in 2,5-elimination of pyruvate from 2-succinyl-5-enolpyruvyl-6-hydroxy-3-cyclohexene-1-carboxylate (SEPHCHC) and the formation of 2-succinyl-6-hydroxy-2,4-cyclohexadiene-1-carboxylate (SHCHC). This is 2-succinyl-6-hydroxy-2,4-cyclohexadiene-1-carboxylate synthase from Escherichia coli (strain K12 / MC4100 / BW2952).